We begin with the raw amino-acid sequence, 96 residues long: MLPEEIIKRPIITEKSMSMIPQKKYTFEVDRRANKIEIKKAVEQLFGVEVEKVWTMNVKPKRKRVGRFEGRTKAWKKAIVKLTDRSKTIEFFDSLI.

The protein belongs to the universal ribosomal protein uL23 family. In terms of assembly, part of the 50S ribosomal subunit. Contacts protein L29, and trigger factor when it is bound to the ribosome.

Its function is as follows. One of the early assembly proteins it binds 23S rRNA. One of the proteins that surrounds the polypeptide exit tunnel on the outside of the ribosome. Forms the main docking site for trigger factor binding to the ribosome. The sequence is that of Large ribosomal subunit protein uL23 from Caldicellulosiruptor bescii (strain ATCC BAA-1888 / DSM 6725 / KCTC 15123 / Z-1320) (Anaerocellum thermophilum).